A 105-amino-acid polypeptide reads, in one-letter code: Heat shock protein HspQ (105 aa).

Belongs to the HspQ family.

The protein localises to the cytoplasm. Functionally, involved in the degradation of certain denaturated proteins, including DnaA, during heat shock stress. This Klebsiella pneumoniae (strain 342) protein is Heat shock protein HspQ.